Here is a 522-residue protein sequence, read N- to C-terminus: Biotin-dependent long chain acyl-coenzyme A carboxylase beta4 subunit (522 aa).

The CoA carboxyltransferase N-terminal domain occupies Thr-11–Asn-261. The 234-residue stretch at Gly-270 to Leu-503 folds into the CoA carboxyltransferase C-terminal domain.

The protein belongs to the AccD/PCCB family. In terms of assembly, the biotin-dependent long-chain acyl-CoA carboxylase (LCC) complex is composed of AccA3, which contains the biotin carboxylase (BC) and biotin carboxyl carrier protein (BCCP) domains, and AccD4, which contains the carboxyl transferase (CT) domain. The complex also contains the beta5 subunit AccD5 and the epsilon subunit AccE5. The four subunits are essential for activity, but AccD5, together with AccE5, probably plays a structural role rather than a catalytic one.

In terms of biological role, component of a biotin-dependent acyl-CoA carboxylase complex. This subunit transfers the CO2 from carboxybiotin to the CoA ester substrate. When associated with the alpha3 subunit AccA3, the beta5 subunit AccD5 and the epsilon subunit AccE5, forms the LCC complex, which is involved in the carboxylation of long chain acyl-CoA. The LCC complex can use C16-C24 substrates, the highest specific activity is obtained with carboxy-C20-CoA. Has low activity with acetyl-CoA and propionyl-CoA. The protein is Biotin-dependent long chain acyl-coenzyme A carboxylase beta4 subunit of Mycobacterium tuberculosis (strain ATCC 25618 / H37Rv).